The chain runs to 879 residues: Interference hedgehog (879 aa).

A signal peptide spans 1–20; the sequence is MTLLTSSLLLFSLLTSRLEA. The Extracellular segment spans residues 21–703; it reads IPVLEKSPAH…ETFNMSPMLT (683 aa). 4 Ig-like C2-type domains span residues 45–142, 132–232, 252–340, and 346–432; these read PGVR…IARL, PLVV…ERIQ, PHLL…YIKV, and PQIV…LQVN. 4 disulfide bridges follow: Cys68-Cys126, Cys173-Cys220, Cys276-Cys324, and Cys367-Cys414. N-linked (GlcNAc...) asparagine glycans are attached at residues Asn102 and Asn209. Residues 426 to 467 are disordered; the sequence is GTLLQVNPKQIQEPRESGGTHRPKPNQGSKQKQMYPPSPPNV. Fibronectin type-III domains lie at 461 to 567 and 575 to 670; these read PPSP…LQPG and VPEL…TQRP. Residue Asn466 is glycosylated (N-linked (GlcNAc...) asparagine). 4 residues coordinate heparin: Arg497, Lys501, Lys503, and Arg541. Residue Asn557 is glycosylated (N-linked (GlcNAc...) asparagine). The tract at residues 662–698 is disordered; the sequence is LKQGRTQRPKTSTTEEPTLQMGDRDTTTPSHNETFNM. Polar residues-rich tracts occupy residues 665 to 678 and 688 to 698; these read GRTQ…TEEP and TTPSHNETFNM. An N-linked (GlcNAc...) asparagine glycan is attached at Asn693. A helical transmembrane segment spans residues 704–724; it reads GTLGGGAVLTLLLISICLCVC. Over 725-879 the chain is Cytoplasmic; it reads RRRSSRSRGN…SSGSLNSVGV (155 aa). Positions 728-879 are disordered; sequence SSRSRGNNPN…SSGSLNSVGV (152 aa). Low complexity-rich tracts occupy residues 822–836 and 863–879; these read RAGG…NNNN and SSRS…SVGV.

It belongs to the immunoglobulin superfamily. IHOG family. Homodimer. Heterotetramer; 2 iHog chains bind 2 hh chains when facilitated by heparin, heparin is required to promote high-affinity interactions between hh and iHog.

The protein localises to the membrane. Its function is as follows. Mediates response to the active Hedgehog (Hh) protein signal in embryos, functioning upstream or at the level of patched (ptc). This Drosophila erecta (Fruit fly) protein is Interference hedgehog.